We begin with the raw amino-acid sequence, 141 residues long: Auxin-responsive protein SAUR63 (141 aa).

It belongs to the ARG7 family. In terms of tissue distribution, expressed in hypocotyls, cotyledons, petioles, young rosette leaves, apical portion of inflorescence stems, stamen filaments and petals.

It localises to the cell membrane. Functionally, may promote auxin-stimulated organ elongation, such as hypocotyls, stamen filaments and petals. In Arabidopsis thaliana (Mouse-ear cress), this protein is Auxin-responsive protein SAUR63.